The following is a 245-amino-acid chain: Nodulation protein G (245 aa).

Position 11–35 (11–35) interacts with NAD(+); sequence VTGASGAIGGAIARVLHAQGAIVGL. Substrate is bound at residue Ser-139. The active-site Proton acceptor is the Tyr-152.

The protein belongs to the short-chain dehydrogenases/reductases (SDR) family.

In terms of biological role, proposed to modify Nod factor fatty acyl chain. The sequence is that of Nodulation protein G (nodG) from Rhizobium meliloti (strain 1021) (Ensifer meliloti).